Here is a 332-residue protein sequence, read N- to C-terminus: Tsukubadiene synthase (332 aa).

Asp75 and Glu80 together coordinate Mg(2+). The short motif at 75–80 (DDHLDE) is the DDXXXE motif element. Arg165 is a binding site for substrate. Mg(2+) contacts are provided by Ser212, Ser216, and Glu220. The SXXXSXXXE motif signature appears at 212-220 (SDLHSFQLE). Residue 298-299 (RY) coordinates substrate.

Belongs to the terpene synthase family. Mg(2+) serves as cofactor.

The catalysed reaction is (2E,6E,10E)-geranylgeranyl diphosphate = tsukubadiene + diphosphate. Its function is as follows. Catalyzes the formation of the 5-9-5 ring skeleton (3S,6S,11R,14S)-tsukubadiene from geranylgeranyl diphosphate (GGPP) via a 1,11-cyclization and a 10Re,14Re-cyclization. This chain is Tsukubadiene synthase, found in Streptomyces tsukubensis (strain DSM 42081 / NBRC 108919 / NRRL 18488 / 9993).